We begin with the raw amino-acid sequence, 416 residues long: 4-hydroxy-3-methylbut-2-en-1-yl diphosphate synthase (flavodoxin) (416 aa).

Residues Cys-304, Cys-307, Cys-350, and Glu-357 each coordinate [4Fe-4S] cluster.

This sequence belongs to the IspG family. It depends on [4Fe-4S] cluster as a cofactor.

The catalysed reaction is (2E)-4-hydroxy-3-methylbut-2-enyl diphosphate + oxidized [flavodoxin] + H2O + 2 H(+) = 2-C-methyl-D-erythritol 2,4-cyclic diphosphate + reduced [flavodoxin]. The protein operates within isoprenoid biosynthesis; isopentenyl diphosphate biosynthesis via DXP pathway; isopentenyl diphosphate from 1-deoxy-D-xylulose 5-phosphate: step 5/6. In terms of biological role, converts 2C-methyl-D-erythritol 2,4-cyclodiphosphate (ME-2,4cPP) into 1-hydroxy-2-methyl-2-(E)-butenyl 4-diphosphate. The sequence is that of 4-hydroxy-3-methylbut-2-en-1-yl diphosphate synthase (flavodoxin) from Rhizobium leguminosarum bv. trifolii (strain WSM2304).